The following is a 457-amino-acid chain: ATP synthase subunit beta (457 aa).

ATP is bound at residue 150–157; that stretch reads GGAGVGKT.

The protein belongs to the ATPase alpha/beta chains family. F-type ATPases have 2 components, CF(1) - the catalytic core - and CF(0) - the membrane proton channel. CF(1) has five subunits: alpha(3), beta(3), gamma(1), delta(1), epsilon(1). CF(0) has three main subunits: a(1), b(2) and c(9-12). The alpha and beta chains form an alternating ring which encloses part of the gamma chain. CF(1) is attached to CF(0) by a central stalk formed by the gamma and epsilon chains, while a peripheral stalk is formed by the delta and b chains.

Its subcellular location is the cell membrane. It catalyses the reaction ATP + H2O + 4 H(+)(in) = ADP + phosphate + 5 H(+)(out). Produces ATP from ADP in the presence of a proton gradient across the membrane. The catalytic sites are hosted primarily by the beta subunits. The sequence is that of ATP synthase subunit beta from Baumannia cicadellinicola subsp. Homalodisca coagulata.